Consider the following 298-residue polypeptide: uncharacterized protein (298 aa).

The protein to M.tuberculosis Rv1486c, M.bovis Mb1522c and M.avium MAV321.

This is an uncharacterized protein from Mycobacterium leprae (strain TN).